A 75-amino-acid chain; its full sequence is UPF0270 protein PST_1436 (75 aa).

It belongs to the UPF0270 family.

This is UPF0270 protein PST_1436 from Stutzerimonas stutzeri (strain A1501) (Pseudomonas stutzeri).